We begin with the raw amino-acid sequence, 410 residues long: Protein king tubby 2 (410 aa).

Residues 48 to 72 (SPNNPDQILTSTGNASITTTPTSPY) are compositionally biased toward polar residues. Disordered stretches follow at residues 48–109 (SPNN…STRH) and 121–159 (ISPALMNNNGGSHHDSSSGKSVEHSSPQASGHNDTEGDV). The span at 132–143 (SHHDSSSGKSVE) shows a compositional bias: basic and acidic residues.

The protein belongs to the TUB family.

The protein resides in the cytoplasm. Its subcellular location is the nucleus. The chain is Protein king tubby 2 (king-tubby2) from Aedes aegypti (Yellowfever mosquito).